The following is a 266-amino-acid chain: Non-structural maintenance of chromosomes element 1 homolog (266 aa).

The interval 1–102 (MQGNTRRTGV…SVSKMASDFA (102 aa)) is interaction with NSMCE3. The RING-type; atypical zinc finger occupies 191 to 232 (CNICRSLLIQGQSCETCGIRMHLPCVAKYFQSSSEPHCPHCN). A compositionally biased stretch (basic and acidic residues) spans 243–252 (FDPEKERETG). A disordered region spans residues 243-266 (FDPEKERETGMSRSNKRPSRSRQH). A compositionally biased stretch (basic residues) spans 256–266 (SNKRPSRSRQH).

It belongs to the NSE1 family. Component of the SMC5-SMC6 complex which consists at least of SMC5, SMC6, NSMCE2, NSMCE1, NSMCE4A or EID3 and NSMCE3. NSMCE1, NSMCE4A or EID3 and NSMCE3 probably form a subcomplex that bridges the head domains of the SMC5-SMC6 heterodimer. Interacts with NSMCE3. In terms of processing, ubiquitinated.

Its subcellular location is the nucleus. It is found in the chromosome. The protein resides in the telomere. It carries out the reaction S-ubiquitinyl-[E2 ubiquitin-conjugating enzyme]-L-cysteine + [acceptor protein]-L-lysine = [E2 ubiquitin-conjugating enzyme]-L-cysteine + N(6)-ubiquitinyl-[acceptor protein]-L-lysine.. Its function is as follows. RING-type zinc finger-containing E3 ubiquitin ligase that assembles with melanoma antigen protein (MAGE) to catalyze the direct transfer of ubiquitin from E2 ubiquitin-conjugating enzyme to a specific substrate. Within MAGE-RING ubiquitin ligase complex, MAGE stimulates and specifies ubiquitin ligase activity likely through recruitment and/or stabilization of the E2 ubiquitin-conjugating enzyme at the E3:substrate complex. Involved in maintenance of genome integrity, DNA damage response and DNA repair. NSMCE3/MAGEG1 and NSMCE1 ubiquitin ligase are components of SMC5-SMC6 complex and may positively regulate homologous recombination-mediated DNA repair. This chain is Non-structural maintenance of chromosomes element 1 homolog (NSMCE1), found in Bos taurus (Bovine).